The chain runs to 363 residues: Phosphoribosylformylglycinamidine cyclo-ligase (363 aa).

Belongs to the AIR synthase family.

The protein localises to the cytoplasm. It carries out the reaction 2-formamido-N(1)-(5-O-phospho-beta-D-ribosyl)acetamidine + ATP = 5-amino-1-(5-phospho-beta-D-ribosyl)imidazole + ADP + phosphate + H(+). The protein operates within purine metabolism; IMP biosynthesis via de novo pathway; 5-amino-1-(5-phospho-D-ribosyl)imidazole from N(2)-formyl-N(1)-(5-phospho-D-ribosyl)glycinamide: step 2/2. In Bartonella tribocorum (strain CIP 105476 / IBS 506), this protein is Phosphoribosylformylglycinamidine cyclo-ligase.